The chain runs to 166 residues: RNA polymerase sigma factor SigV (166 aa).

The Polymerase core binding signature appears at 38–51; the sequence is DIVQESIKKALSSV. The segment at residues 131 to 150 is a DNA-binding region (H-T-H motif); sequence LEEIAEITGENTNTVKTRLY.

It belongs to the sigma-70 factor family. ECF subfamily. As to quaternary structure, interacts with RsiV.

In terms of biological role, sigma factors are initiation factors that promote the attachment of RNA polymerase to specific initiation sites and are then released. Positively regulates the expression of proteins involved in stress responses against bacitracin, paraquat and tellurite. In Bacillus subtilis (strain 168), this protein is RNA polymerase sigma factor SigV (sigV).